We begin with the raw amino-acid sequence, 942 residues long: Isoleucine--tRNA ligase (942 aa).

The short motif at 58–68 (PYVNGSIHLGH) is the 'HIGH' region element. L-isoleucyl-5'-AMP is bound at residue Glu564. Residues 605–609 (KMSKS) carry the 'KMSKS' region motif. Residue Lys608 coordinates ATP. Zn(2+) contacts are provided by Cys905, Cys908, Cys925, and Cys928.

Belongs to the class-I aminoacyl-tRNA synthetase family. IleS type 1 subfamily. Monomer. The cofactor is Zn(2+).

It localises to the cytoplasm. It carries out the reaction tRNA(Ile) + L-isoleucine + ATP = L-isoleucyl-tRNA(Ile) + AMP + diphosphate. Catalyzes the attachment of isoleucine to tRNA(Ile). As IleRS can inadvertently accommodate and process structurally similar amino acids such as valine, to avoid such errors it has two additional distinct tRNA(Ile)-dependent editing activities. One activity is designated as 'pretransfer' editing and involves the hydrolysis of activated Val-AMP. The other activity is designated 'posttransfer' editing and involves deacylation of mischarged Val-tRNA(Ile). This Blochmanniella pennsylvanica (strain BPEN) protein is Isoleucine--tRNA ligase.